The following is a 97-amino-acid chain: Antitoxin TacA2 (97 aa).

Belongs to the TacA antitoxin family. In terms of assembly, homodimer. Forms a complex with cognate toxin TacT2.

Its function is as follows. Antitoxin component of a type II toxin-antitoxin (TA) system. Counteracts the toxic effect of cognate toxin TacT2. The TacA2-TacT2 complex both represses and derepresses expression of its own operon. In Salmonella enteritidis, this protein is Antitoxin TacA2.